The sequence spans 495 residues: Transcription termination/antitermination protein NusA (495 aa).

In terms of domain architecture, S1 motif spans 135–200; sequence GEIITGVVKK…RGAQLFVTRS (66 aa). The KH domain maps to 302–368; that stretch reads KHTMDIAVEA…FTKYLDIDED (67 aa). 2 repeat units span residues 364–414 and 439–489. The interval 364 to 489 is 2 X 51 AA approximate repeats; the sequence is DIDEDFATVL…ALIMAARNIC (126 aa).

Belongs to the NusA family. As to quaternary structure, monomer. Binds directly to the core enzyme of the DNA-dependent RNA polymerase and to nascent RNA.

The protein localises to the cytoplasm. Participates in both transcription termination and antitermination. The sequence is that of Transcription termination/antitermination protein NusA from Shigella flexneri.